Reading from the N-terminus, the 131-residue chain is Agouti-related protein (131 aa).

An N-terminal signal peptide occupies residues Met1–Gly20. A propeptide spanning residues Val21 to Arg81 is cleaved from the precursor. 5 cysteine pairs are disulfide-bonded: Cys86-Cys101, Cys93-Cys107, Cys100-Cys118, Cys104-Cys128, and Cys109-Cys116. The 43-residue stretch at Cys86–Cys128 folds into the Agouti domain. Residues Arg110–Phe112 are interaction with melanocortin receptors.

In terms of assembly, interacts with melanocortin receptors MC3R, MC4R and MC5R. In terms of tissue distribution, expressed in arcuate nucleus and median eminence, adrenal gland (medulla), hypothalamus, testis, and lung.

The protein localises to the secreted. Its subcellular location is the golgi apparatus lumen. Plays a role in weight homeostasis. Involved in the control of feeding behavior through the central melanocortin system. Acts as alpha melanocyte-stimulating hormone antagonist by inhibiting cAMP production mediated by stimulation of melanocortin receptors within the hypothalamus and adrenal gland. Has very low activity with MC5R. Is an inverse agonist for MC3R and MC4R being able to suppress their constitutive activity. It promotes MC3R and MC4R endocytosis in an arrestin-dependent manner. This Mus musculus (Mouse) protein is Agouti-related protein (Agrp).